Consider the following 293-residue polypeptide: Acetylglutamate kinase (293 aa).

Residues 70–71 (GG), Arg-92, and Asn-186 each bind substrate.

The protein belongs to the acetylglutamate kinase family. ArgB subfamily.

It localises to the cytoplasm. It carries out the reaction N-acetyl-L-glutamate + ATP = N-acetyl-L-glutamyl 5-phosphate + ADP. Its pathway is amino-acid biosynthesis; L-arginine biosynthesis; N(2)-acetyl-L-ornithine from L-glutamate: step 2/4. Its function is as follows. Catalyzes the ATP-dependent phosphorylation of N-acetyl-L-glutamate. In Parasynechococcus marenigrum (strain WH8102), this protein is Acetylglutamate kinase.